A 201-amino-acid polypeptide reads, in one-letter code: Charged multivesicular body protein 6 (201 aa).

Glycine 2 carries the N-myristoyl glycine lipid modification. Residues 10-145 (QSRVTEQDKA…YQRQIDELLA (136 aa)) are a coiled coil. Serine 119 carries the phosphoserine modification. Threonine 130 is modified (phosphothreonine). Residues 168–179 (IELPEVPSEPLP) carry the Type-2 MIT-interacting motif motif. Residues 171 to 201 (PEVPSEPLPEKIPEDVPVKARPRQAELVAAS) form a disordered region. Residues 178–188 (LPEKIPEDVPV) show a composition bias toward basic and acidic residues.

It belongs to the SNF7 family. Probable core component of the endosomal sorting required for transport complex III (ESCRT-III). ESCRT-III components are thought to multimerize to form a flat lattice on the perimeter membrane of the endosome. Several assembly forms of ESCRT-III may exist that interact and act sequentially. Interacts with VPS4A; the interaction is direct. Interacts with VPS4B; the interaction is direct. Interacts with CHMP4A, CHMP4B and CHMP4C. Interacts with SNF8, VPS25 and VPS36. Post-translationally, ISGylated in a CHMP5-dependent manner. Isgylation weakens its interaction with VPS4A.

It is found in the endomembrane system. The protein localises to the endosome membrane. The protein resides in the late endosome membrane. It localises to the membrane. In terms of biological role, probable core component of the endosomal sorting required for transport complex III (ESCRT-III) which is involved in multivesicular bodies (MVBs) formation and sorting of endosomal cargo proteins into MVBs. MVBs contain intraluminal vesicles (ILVs) that are generated by invagination and scission from the limiting membrane of the endosome and mostly are delivered to lysosomes enabling degradation of membrane proteins, such as stimulated growth factor receptors, lysosomal enzymes and lipids. The MVB pathway appears to require the sequential function of ESCRT-O, -I,-II and -III complexes. ESCRT-III proteins mostly dissociate from the invaginating membrane before the ILV is released. The ESCRT machinery also functions in topologically equivalent membrane fission events, such as the terminal stages of cytokinesis and the budding of enveloped viruses (lentiviruses). ESCRT-III proteins are believed to mediate the necessary vesicle extrusion and/or membrane fission activities, possibly in conjunction with the AAA ATPase VPS4. In the ESCRT-III complex, it probably serves as an acceptor for the ESCRT-II complex on endosomal membrane. The polypeptide is Charged multivesicular body protein 6 (CHMP6) (Pongo abelii (Sumatran orangutan)).